Consider the following 85-residue polypeptide: Large ribosomal subunit protein bL27 (85 aa).

The disordered stretch occupies residues 1 to 26 (MAHKKAGGSTRNGRDSESKRLGVKRF).

The protein belongs to the bacterial ribosomal protein bL27 family.

In Saccharophagus degradans (strain 2-40 / ATCC 43961 / DSM 17024), this protein is Large ribosomal subunit protein bL27.